The sequence spans 1082 residues: Putative white-brown complex homolog protein 30 (1082 aa).

2 helical membrane passes run 12–32 (HIFLFFVFGLSFMSFALSLDG) and 292–312 (NIHAYGAILIASLSLLMIMVY). Positions 329-348 (SREAAARHAKETTQARERWK) are enriched in basic and acidic residues. The interval 329 to 437 (SREAAARHAK…QAPKGKQLHT (109 aa)) is disordered. Residues 484-726 (VAFKDLTLTL…FADIGITVPD (243 aa)) enclose the ABC transporter domain. 518–525 (GPSGAGKT) is an ATP binding site. An ABC transmembrane type-2 domain is found at 832–1029 (RQYRYFVGRV…TLEAFVLSNA (198 aa)). 5 helical membrane-spanning segments follow: residues 853-873 (ALDFLILLVAGACLGTLAKVN), 877-897 (IDTLGYTYTIIAVSLLCKISA), 958-978 (YIVLVCLVYCVTGMAYIFAIL), 979-999 (YSPSAAQLLSVLVPVVMTLIA), and 1054-1074 (WILCLIVLVLMGLICRFIAYF).

Belongs to the ABC transporter superfamily. ABCG family. Eye pigment precursor importer (TC 3.A.1.204) subfamily.

The protein resides in the membrane. The polypeptide is Putative white-brown complex homolog protein 30 (WBC30) (Arabidopsis thaliana (Mouse-ear cress)).